The following is a 153-amino-acid chain: uncharacterized protein (153 aa).

Residues methionine 1–alanine 22 form the signal peptide. Residue cysteine 23 is the site of N-palmitoyl cysteine attachment. Cysteine 23 carries the S-diacylglycerol cysteine lipid modification. Residues aspartate 117–lysine 153 are disordered. Over residues methionine 124 to glycine 133 the composition is skewed to polar residues.

It to E.coli YehR.

It is found in the cell membrane. This is an uncharacterized protein from Listeria monocytogenes serovar 1/2a (strain ATCC BAA-679 / EGD-e).